The sequence spans 544 residues: Secreted aspartic protease 9 (544 aa).

The signal sequence occupies residues 1–17 (MRLNSVALLSLVATALA). The tract at residues 31 to 50 (GESKDDLSPEDDSNPRFVKR) is disordered. Residues 65 to 479 (YMATLKIGSN…DLDDYEVSLA (415 aa)) enclose the Peptidase A1 domain. Asp-83 is an active-site residue. 83-85 (DTG) contacts pepstatin A. Cysteines 98 and 195 form a disulfide. N-linked (GlcNAc...) asparagine glycans are attached at residues Asn-212, Asn-240, and Asn-252. Residue Asp-371 is part of the active site. 371-375 (DTGST) provides a ligand contact to pepstatin A. A disulfide bond links Cys-406 and Cys-441. 2 N-linked (GlcNAc...) asparagine glycosylation sites follow: Asn-422 and Asn-499. Positions 500 to 519 (SSGSGTTSSSGTSTSTSTRH) are disordered. Ser-520 carries GPI-anchor amidated serine lipidation. The propeptide at 521–544 (AGSIISKPVYGLLLSLLISCYVLV) is removed in mature form. Residues 524–544 (IISKPVYGLLLSLLISCYVLV) form a helical membrane-spanning segment.

Belongs to the peptidase A1 family. As to quaternary structure, monomer. In terms of processing, the GPI-anchor is attached to the protein in the endoplasmic reticulum and serves to target the protein to the cell surface. There, the glucosamine-inositol phospholipid moiety is cleaved off and the GPI-modified mannoprotein is covalently attached via its lipidless GPI glycan remnant to the 1,6-beta-glucan of the outer cell wall layer.

The protein resides in the cell membrane. It is found in the secreted. Its subcellular location is the cell wall. The enzyme catalyses Preferential cleavage at the carboxyl of hydrophobic amino acids, but fails to cleave 15-Leu-|-Tyr-16, 16-Tyr-|-Leu-17 and 24-Phe-|-Phe-25 of insulin B chain. Activates trypsinogen, and degrades keratin.. In terms of biological role, secreted aspartic peptidases (SAPs) are a group of ten acidic hydrolases considered as key virulence factors. These enzymes supply the fungus with nutrient amino acids as well as are able to degrade the selected host's proteins involved in the immune defense. Moreover, acts toward human hemoglobin though limited proteolysis to generate a variety of antimicrobial hemocidins, enabling to compete with the other microorganisms of the same physiological niche using the microbicidal peptides generated from the host protein. Its function is as follows. Plays a key role in defense against host by cleaving histatin-5 (Hst 5), a peptide from human saliva that carries out fungicidal activity. The cleavage rate decreases in an order of SAP2 &gt; SAP9 &gt; SAP3 &gt; SAP7 &gt; SAP4 &gt; SAP1 &gt; SAP8. The first cleavage occurs between residues 'Lys-17' and 'His-18' of Hst 5, giving DSHAKRHHGYKRKFHEK and HHSHRGY peptides. Simultaneously, the DSHAKRHHGYKRK peptide is also formed. Further fragmentation by SAP9 results in FHEK product. The protein is Secreted aspartic protease 9 of Candida albicans (strain SC5314 / ATCC MYA-2876) (Yeast).